Consider the following 426-residue polypeptide: Serine protease HTRA2, mitochondrial (426 aa).

The segment covering 31–58 has biased composition (low complexity); the sequence is SSTCNSTNTDNGSHNTNYNSSNNNNNNN. Positions 31-59 are disordered; that stretch reads SSTCNSTNTDNGSHNTNYNSSNNNNNNND. Residues 71–87 traverse the membrane as a helical segment; the sequence is FLVPFSLGALASSVVAG. The short motif at 79-82 is the IAP-binding element; the sequence is ALAS. Positions 143 to 306 are serine protease; that stretch reads SNGSGFVIEQ…IPIDYVKLFL (164 aa). Catalysis depends on charge relay system residues H161, D193, and S270. Positions 329-414 constitute a PDZ domain; it reads MGITMLTLTP…DLDMVILRGV (86 aa).

It belongs to the peptidase S1C family. As to quaternary structure, interacts with th/DIAP1 (via BIR 2 domain).

The protein resides in the mitochondrion intermembrane space. Its subcellular location is the mitochondrion membrane. It catalyses the reaction Cleavage of non-polar aliphatic amino-acids at the P1 position, with a preference for Val, Ile and Met. At the P2 and P3 positions, Arg is selected most strongly with a secondary preference for other hydrophilic residues.. In terms of biological role, serine protease that shows proteolytic activity against a non-specific substrate beta-casein. Promotes or induces cell death either by direct binding to and inhibition of BIRC proteins (also called inhibitor of apoptosis proteins, IAPs), leading to an increase in caspase activity, or by a BIRC inhibition-independent, caspase-independent and serine protease activity-dependent mechanism. Can antagonize antiapoptotic activity of th/Diap1 by directly inducing the degradation of th/Diap1. This chain is Serine protease HTRA2, mitochondrial, found in Drosophila grimshawi (Hawaiian fruit fly).